A 418-amino-acid polypeptide reads, in one-letter code: MHIFDELKDRGLIFQTTDEEALRKALEEGQVSYYTGYDPTADSLHLGHLVAILTSRRLQLAGHKPYALVGGATGLIGDPSFKDAERSLQTKDTVDGWVKSIQGQLSRFLDFENGENKAVMVNNYDWFGSISFIDFLRDIGKYFTVNYMMSKESVKKRIETGISYTEFAYQIMQGYDFFVLNQDHNVTLQIGGSDQWGNMTAGTELLRRKADKTGHVITVPLITDATGKKFGKSEGNAVWLNPEKTSPYEMYQFWMNVMDADAVRFLKIFTFLSLDEIEDIRKQFEAAPHERLAQKVLAREVVTLVHGEEAYKEALNITEQLFAGNIKNLSVKELKQGLRGVPNYQVQADEHNNIVELLVSSGIVNSKRQAREDVQNGAIYVNGDRIQDLDYVLSDADKLENELTVIRRGKKKYFVLTY.

Tyrosine 34 lines the L-tyrosine pocket. Positions 39-48 match the 'HIGH' region motif; the sequence is PTADSLHLGH. 2 residues coordinate L-tyrosine: tyrosine 169 and glutamine 173. Positions 229–233 match the 'KMSKS' region motif; the sequence is KFGKS. Residue lysine 232 coordinates ATP. The 67-residue stretch at 352–418 folds into the S4 RNA-binding domain; that stretch reads NNIVELLVSS…GKKKYFVLTY (67 aa).

It belongs to the class-I aminoacyl-tRNA synthetase family. TyrS type 1 subfamily. In terms of assembly, homodimer.

The protein localises to the cytoplasm. The catalysed reaction is tRNA(Tyr) + L-tyrosine + ATP = L-tyrosyl-tRNA(Tyr) + AMP + diphosphate + H(+). In terms of biological role, catalyzes the attachment of tyrosine to tRNA(Tyr) in a two-step reaction: tyrosine is first activated by ATP to form Tyr-AMP and then transferred to the acceptor end of tRNA(Tyr). This Streptococcus pneumoniae (strain 70585) protein is Tyrosine--tRNA ligase.